The chain runs to 1473 residues: NACHT, LRR and PYD domains-containing protein 1 (1473 aa).

Positions 1–92 (MAGGAWGRLA…CAQAQEGAGH (92 aa)) constitute a Pyrin domain. The interval 90 to 113 (AGHSPSFPYSPSEPHLGSPSQPTS) is disordered. 3 positions are modified to phosphoserine; by MAPK11 and MAPK14: Ser93, Ser99, and Ser101. Ser107 carries the phosphoserine; by MAPK14 modification. A ZAKalpha motif 1 motif is present at residues 111 to 117 (PTSTAVL). At Thr112 the chain carries Phosphothreonine; by MAPK11, MAPK14 and MAP3K20. Ser113 carries the post-translational modification Phosphoserine; by MAP3K20. Thr114 and Thr129 each carry phosphothreonine; by MAP3K20. A Phosphoserine; by MAP3K20 modification is found at Ser132. Residues 160–254 (LPSSPDHESP…HTSLQPHHHP (95 aa)) are disordered. Residue Ser163 is modified to Phosphoserine; by MAPK14. At Ser168 the chain carries Phosphoserine; by MAPK11 and MAPk14. Phosphoserine; by MAPK11 and MAPK14 is present on Ser170. Residues 170–182 (SQESPNAPTSTAV) show a composition bias toward polar residues. Residue Ser173 is modified to Phosphoserine; by MAPK11. The short motif at 177–183 (PTSTAVL) is the ZAKalpha motif 2 element. Thr178 bears the Phosphothreonine; by MAPK11 mark. Ser179 carries the phosphoserine; by MAPK11 and MAP3K20 modification. Thr180 is subject to Phosphothreonine; by MAPK11 and MAP3K20. Over residues 218–231 (EIREREREKSEKGR) the composition is skewed to basic and acidic residues. Residues 328–637 (RIVILQGAAG…EFFAAMSYVL (310 aa)) form the NACHT domain. 334 to 341 (GAAGIGKS) contacts ATP. LRR repeat units follow at residues 809–830 (NLKE…SLCK), 838–858 (LLET…KDLA), 866–887 (TLTE…HLCQ), 895–915 (KLQR…QDLA), 923–944 (SLKE…LLCE), and 950–973 (ACKL…ELRA). Residues 991 to 1017 (VMTPTEGLDTGEMSNSTSSLKRQRLGS) form a disordered region. A ZU5 region spans residues 1079–1212 (FWGPTGPVAT…HHIVLENPSF (134 aa)). The FIIND domain occupies 1079–1364 (FWGPTGPVAT…LMPATTLIPP (286 aa)). Residues 1213–1364 (SPLGVLLKMI…LMPATTLIPP (152 aa)) are UPA. Positions 1374–1463 (DAPQLLHFVD…HLIMELWEKG (90 aa)) constitute a CARD domain.

Belongs to the NLRP family. In terms of assembly, interacts (via LRR repeats) with BCL2 and BCL2L1 (via the loop between motifs BH4 and BH3); these interactions reduce NLRP1 inflammasome-induced CASP1 activation and IL1B release, possibly by impairing NLRP1 interaction with PYCARD. Interacts with NOD2; this interaction is enhanced in the presence of muramyl dipeptide (MDP) and increases IL1B release. Interacts with EIF2AK2/PKR; this interaction requires EIF2AK2 activity, is accompanied by EIF2AK2 autophosphorylation and promotes inflammasome assembly in response to danger-associated signals. Interacts with MEFV; this interaction targets NLRP1 to degradation by autophagy, hence preventing excessive IL1B- and IL18-mediated inflammation. Binds (via LRR domain) to dsDNA and dsRNA. Interacts with DPP9; leading to inhibit activation of the inflammasome. DPP9 acts via formation of a ternary complex, composed of a DPP9 homodimer, one full-length NLRP1 protein, and one cleaved C-terminus of NLRP1 (NACHT, LRR and PYD domains-containing protein 1, C-terminus). Interacts with DPP8; leading to inhibit activation of the inflammasome, probably via formation of a ternary complex with DPP8. Interacts with the C-terminal part of NLRP1 (NACHT, LRR and PYD domains-containing protein 1, C-terminus) in absence of pathogens and other damage-associated signals. As to quaternary structure, interacts with the N-terminal part of NLRP1 (NACHT, LRR and PYD domains-containing protein 1, N-terminus) in absence of pathogens and other damage-associated signals. Homomultimer; forms the NLRP1 inflammasome polymeric complex, a filament composed of homopolymers of this form in response to pathogens and other damage-associated signals. The NLRP1 inflammasome polymeric complex associates with PYCARD/ASC. Interacts (via CARD domain) with PYCARD/ASC (via CARD domain); leading to pro-caspase-1 (proCASP1) recruitment. Pro-caspase-1 (proCASP1) filament formation increases local enzyme concentration, resulting in trans-autocleavage and activation. Active CASP1 then processes IL1B and IL18 precursors, leading to the release of mature cytokines in the extracellular milieu and inflammatory response. In terms of assembly, (Microbial infection) Interacts with vaccinia virus protein F1. (Microbial infection) Interacts with human herpes virus 8/HHV-8 proteins ORF45; relieving autoinhibition of the NLRP1 inflammasome. Autocatalytically cleaved. Autocatalytic cleavage in FIIND region occurs constitutively, prior to activation signals, and is required for inflammasome activity (IL1B release), possibly by facilitating CASP1 binding. Both N- and C-terminal parts remain associated non-covalently. Post-translationally, ubiquitinated by the cullin:ZER1/ZYG11B complex in response to pathogen-associated signals, leading to its degradation by the proteasome and subsequent release of the cleaved C-terminal part of the protein (NACHT, LRR and PYD domains-containing protein 1, C-terminus), which polymerizes and forms the NLRP1 inflammasome. In terms of processing, phosphorylated by MAP3K20 isoform ZAKalpha, MAPK11 and MAPK14 in response to UV-B irradiation and ribosome collisions, promoting activation of the NLRP1 inflammasome and pyroptosis. (Microbial infection) Cleaved between Gln-130 and Gly-131 by the Protease 3C from various human enteroviruses and rhinoviruses (EV68, EV71, Coxsackievirus B3, HRV-14 and HRV-16). This cleavage triggers N-glycine-mediated proteasomal degradation of the autoinhibitory NLRP1 N-terminal fragment via the cullin:ZER1/ZYG11B complex which liberates the activating C-terminal fragment and activates NLRP1 inflammasome. Post-translationally, (Microbial infection) Cleaved between Gln-333 and Gly-334 by the 3C-like proteinase nsp5 from human coronavirus SARS-CoV-2. This cleavage liberates the activating C-terminal fragment and activates NLRP1 inflammasome, leading to downstream activation of GSDME and lung epithelial cell death. In terms of tissue distribution, widely expressed. Abundantly expressed in primary immune cells (isoform 1 and isoform 2), including in neutrophils, monocytes/macrophages, dendritic cells (mostly Langerhans cells), and B- and T-lymphocytes (at protein level). Strongly expressed in epithelial cells lining the glandular epithelium, such as that of the gastrointestinal tract (stomach, small intestine, colon), the respiratory tract (trachea and bronchi), and the endometrial and endocervical glands, gallbladder, prostate, and breast (at protein level). In testis, expressed in spermatogonia and primary spermatocytes, but not in Sertoli cells (at protein level). In the brain, expressed in neurons, in particular in pyramidal ones and in oligodendrocytes, but not detected in microglia (at protein level). Expressed in adult and fetal ocular tissues, including in adult and 24-week old fetal choroid, sclera, cornea, and optic nerve, as well as in adult retina and fetal retina/retinal pigment epithelium. Highly expressed in the skin throughout the epidermis and in dermal fibroblasts, in both glabrous skin and plantar skin. It is detected in keratinocytes, but not in melanocytes. Expressed in epidermal appendages such as hair follicles.

Its subcellular location is the cytoplasm. It localises to the cytosol. The protein resides in the nucleus. It is found in the inflammasome. The catalysed reaction is ATP + H2O = ADP + phosphate + H(+). NLRP1 inflammasome is activated by cleavage by the Protease 3C from various human enteroviruses and rhinoviruses (EV68, EV71, Coxsackievirus B3, HRV-14 and HRV-16): cleavage promotes ubiquitination and degradation of the N-terminal part, releasing the cleaved C-terminal part of the protein (NACHT, LRR and PYD domains-containing protein 1, C-terminus), which polymerizes and forms the NLRP1 inflammasome. Activated double-stranded RNA: positive-strand RNA viruses such as Semliki forest virus and long dsRNA activate the NLRP1 inflammasome. In contrast to its mouse ortholog, not activated by Bacillus anthracis lethal toxin. NLRP1 inflammasome is inhibited by DPP8 and DPP9, which sequester the C-terminal fragment of NLRP1 (NACHT, LRR and PYD domains-containing protein 1, C-terminus) in a ternary complex, thereby preventing NLRP1 oligomerization and activation. NLRP1 inflammasome is activated by Val-boroPro (Talabostat, PT-100), an inhibitor of dipeptidyl peptidases DPP8 and DPP9. Val-boroPro relieves inhibition of DPP8 and/or DPP9 by promoting disruption of the ternary complex, releasing its C-terminal part from autoinhibition. ATPase activity is activated by dsRNA-binding but not dsDNA-binding. With respect to regulation, (Microbial infection) The NLRP1 inflammasome is activated by human herpes virus 8/HHV-8 protein ORF45, which interacts with the N-terminal part of NLRP1 and promotes its translocation into the nucleus, relieving autoinhibition and leading to activation. Its activity is regulated as follows. (Microbial infection) NLRP1 inflammasome is activated by cleavage by the 3C-like proteinase nsp5 from human coronavirus SARS-CoV-2. Its function is as follows. Acts as the sensor component of the NLRP1 inflammasome, which mediates inflammasome activation in response to various pathogen-associated signals, leading to subsequent pyroptosis. Inflammasomes are supramolecular complexes that assemble in the cytosol in response to pathogens and other damage-associated signals and play critical roles in innate immunity and inflammation. Acts as a recognition receptor (PRR): recognizes specific pathogens and other damage-associated signals, such as cleavage by some human enteroviruses and rhinoviruses, double-stranded RNA, UV-B irradiation, or Val-boroPro inhibitor, and mediates the formation of the inflammasome polymeric complex composed of NLRP1, CASP1 and PYCARD/ASC. In response to pathogen-associated signals, the N-terminal part of NLRP1 is degraded by the proteasome, releasing the cleaved C-terminal part of the protein (NACHT, LRR and PYD domains-containing protein 1, C-terminus), which polymerizes and associates with PYCARD/ASC to initiate the formation of the inflammasome complex: the NLRP1 inflammasome recruits pro-caspase-1 (proCASP1) and promotes caspase-1 (CASP1) activation, which subsequently cleaves and activates inflammatory cytokines IL1B and IL18 and gasdermin-D (GSDMD), leading to pyroptosis. In the absence of GSDMD expression, the NLRP1 inflammasome is able to recruit and activate CASP8, leading to activation of gasdermin-E (GSDME). Activation of NLRP1 inflammasome is also required for HMGB1 secretion; the active cytokines and HMGB1 stimulate inflammatory responses. Binds ATP and shows ATPase activity. Plays an important role in antiviral immunity and inflammation in the human airway epithelium. Specifically recognizes a number of pathogen-associated signals: upon infection by human rhinoviruses 14 and 16 (HRV-14 and HRV-16), NLRP1 is cleaved and activated which triggers NLRP1-dependent inflammasome activation and IL18 secretion. Positive-strand RNA viruses, such as Semliki forest virus and long dsRNA activate the NLRP1 inflammasome, triggering IL1B release in a NLRP1-dependent fashion. Acts as a direct sensor for long dsRNA and thus RNA virus infection. May also be activated by muramyl dipeptide (MDP), a fragment of bacterial peptidoglycan, in a NOD2-dependent manner. The NLRP1 inflammasome is also activated in response to UV-B irradiation causing ribosome collisions: ribosome collisions cause phosphorylation and activation of NLRP1 in a MAP3K20-dependent manner, leading to pyroptosis. Constitutes the precursor of the NLRP1 inflammasome, which mediates autoproteolytic processing within the FIIND domain to generate the N-terminal and C-terminal parts, which are associated non-covalently in absence of pathogens and other damage-associated signals. In terms of biological role, regulatory part that prevents formation of the NLRP1 inflammasome: in absence of pathogens and other damage-associated signals, interacts with the C-terminal part of NLRP1 (NACHT, LRR and PYD domains-containing protein 1, C-terminus), preventing activation of the NLRP1 inflammasome. In response to pathogen-associated signals, this part is ubiquitinated and degraded by the proteasome, releasing the cleaved C-terminal part of the protein, which polymerizes and forms the NLRP1 inflammasome. Functionally, constitutes the active part of the NLRP1 inflammasome. In absence of pathogens and other damage-associated signals, interacts with the N-terminal part of NLRP1 (NACHT, LRR and PYD domains-containing protein 1, N-terminus), preventing activation of the NLRP1 inflammasome. In response to pathogen-associated signals, the N-terminal part of NLRP1 is degraded by the proteasome, releasing this form, which polymerizes and associates with PYCARD/ASC to form of the NLRP1 inflammasome complex: the NLRP1 inflammasome complex then directly recruits pro-caspase-1 (proCASP1) and promotes caspase-1 (CASP1) activation, leading to gasdermin-D (GSDMD) cleavage and subsequent pyroptosis. Its function is as follows. It is unclear whether is involved in inflammasome formation. It is not cleaved within the FIIND domain, does not assemble into specks, nor promote IL1B release. However, in an vitro cell-free system, it has been shown to be activated by MDP. This is NACHT, LRR and PYD domains-containing protein 1 from Homo sapiens (Human).